The chain runs to 129 residues: MSLEYPEDLKYMDSHEYVRLEGEIATIGISAFAVDELGDIVFIEVPAEGEAIAQGETFGTIESVKAVADLYAPVSGTVIENNQAIVDAPEQLAGDPYGEGWLVKVRISDPSELTNALSASEYRAQVEGS.

Positions 24-106 constitute a Lipoyl-binding domain; that stretch reads IATIGISAFA…YGEGWLVKVR (83 aa). An N6-lipoyllysine modification is found at Lys-65.

Belongs to the GcvH family. As to quaternary structure, the glycine cleavage system is composed of four proteins: P, T, L and H. The cofactor is (R)-lipoate.

Its function is as follows. The glycine cleavage system catalyzes the degradation of glycine. The H protein shuttles the methylamine group of glycine from the P protein to the T protein. This is Glycine cleavage system H protein from Cyanothece sp. (strain PCC 7425 / ATCC 29141).